Consider the following 294-residue polypeptide: Beta-lactamase SME-1 (294 aa).

The first 27 residues, 1–27 (MSNKVNFKTASFLFSVCLALSAFNAHA), serve as a signal peptide directing secretion. An intrachain disulfide couples Cys-72 to Cys-242. The active-site Nucleophile; acyl-ester intermediate is Ser-73. Ser-73, Lys-76, Ser-133, and Asn-135 together coordinate a beta-lactam. The active-site Proton acceptor is the Glu-172. Thr-239 provides a ligand contact to a beta-lactam.

The protein belongs to the class-A beta-lactamase family.

It carries out the reaction a beta-lactam + H2O = a substituted beta-amino acid. Its activity is regulated as follows. Partially inhibited by the beta-lactamase-blocking agents, clavulanic acid and tazobactam. Not inhibited by EDTA. Its function is as follows. Class A beta-lactamase which confers resistance to the beta-lactam antibiotics, including penicillins, some cephalosporins and carbapenems, to JM109 strain E.coli. Acts via hydrolysis of the beta-lactam ring. Has penicillin-, cephalosporin- and carbapenem-hydrolyzing activities. The polypeptide is Beta-lactamase SME-1 (Serratia marcescens).